A 241-amino-acid polypeptide reads, in one-letter code: Probable septum site-determining protein MinC (241 aa).

The interval 109-135 (PSGARERKVDPSSKTPAKPAEPTYRPT) is disordered.

It belongs to the MinC family. As to quaternary structure, interacts with MinD and FtsZ.

In terms of biological role, cell division inhibitor that blocks the formation of polar Z ring septums. Rapidly oscillates between the poles of the cell to destabilize FtsZ filaments that have formed before they mature into polar Z rings. Prevents FtsZ polymerization. This chain is Probable septum site-determining protein MinC, found in Stutzerimonas stutzeri (strain A1501) (Pseudomonas stutzeri).